The sequence spans 146 residues: Hemoglobin subunit beta (146 aa).

At V1 the chain carries N-acetylvaline. The Globin domain occupies 2–146 (HLTGEEKAAV…VANALAHKYH (145 aa)). The residue at position 12 (T12) is a Phosphothreonine. Position 44 is a phosphoserine (S44). Position 59 is an N6-acetyllysine (K59). H63 is a heme b binding site. The residue at position 82 (K82) is an N6-acetyllysine. H92 lines the heme b pocket. An S-nitrosocysteine modification is found at C93. K144 is modified (N6-acetyllysine).

Belongs to the globin family. As to quaternary structure, heterotetramer of two alpha chains and two beta chains. Red blood cells.

Involved in oxygen transport from the lung to the various peripheral tissues. The chain is Hemoglobin subunit beta (HBB) from Martes foina (Beech marten).